We begin with the raw amino-acid sequence, 1302 residues long: Cingulin-like protein 1 (1302 aa).

Residues 1-554 (MELYFGEYQH…ELTQQTNEET (554 aa)) are head. Positions 37–51 (AGSYGVSIRVQGIDG) match the ZIM motif. Positions 75 to 104 (PFPPPVINNLPLHSSNGSVPKENSEELQLP) are disordered. A phosphoserine mark is found at Ser112 and Ser202. Disordered regions lie at residues 186–209 (KKPW…EDPA), 251–305 (FTSG…TPTS), and 364–392 (PGLQ…VDSA). The segment covering 195–204 (PSNSQPTSPS) has biased composition (polar residues). The segment covering 264 to 282 (AHPETKKTRPDVLPFRRQD) has biased composition (basic and acidic residues). Phosphoserine is present on residues Ser283, Ser297, and Ser298. Residues 296-305 (SSSSSTTPTS) show a composition bias toward low complexity. Basic residues predominate over residues 366–377 (LQRRGRSGKRNR). Residues 378-388 (INTDDRKRSRS) show a composition bias toward basic and acidic residues. 3 positions are modified to phosphoserine: Ser388, Ser391, and Ser486. A coiled-coil region spans residues 604–1258 (NSTSEVKDLL…QLNSMKKDLR (655 aa)). Basic and acidic residues predominate over residues 655 to 664 (RSQHNEKVEE). The tract at residues 655-675 (RSQHNEKVEENSTLQQRLEES) is disordered. Ser708 carries the post-translational modification Phosphoserine. Disordered stretches follow at residues 903–929 (AAQG…SEQK) and 1263–1287 (PSKV…YEAP). Residues 917-929 (QLSEKLKEESEQK) are compositionally biased toward basic and acidic residues. The segment at 1263-1302 (PSKVLDDMDDDDDLSTDGGSLYEAPVSYTFSKDSTVASQI) is tail.

This sequence belongs to the cingulin family. In terms of assembly, homodimer or oligomer. Interacts with CD2AP and SH3BP1; probably part of a complex at cell junctions. As to expression, smooth muscle, spleen, testis, fetal brain, amygdala, corpus callosum, cerebellum, thalamus and subthalamic nucleus of adult brain.

The protein localises to the cell junction. It localises to the tight junction. May be involved in anchoring the apical junctional complex, especially tight junctions, to actin-based cytoskeletons. This Homo sapiens (Human) protein is Cingulin-like protein 1 (CGNL1).